The primary structure comprises 195 residues: MKRTAEIDRSTSETRIHLKLTIDGTGLSAIRTTVPFLDHMLHLFARHGLFDLTVEAQGDIDIDFHHTVEDIGIVLGEAFRQALGDKKGIVRYGTARIPMDETLADVTVDLSGRPYLVYNVDLPKVKVGEFDAELAREFFQAFANNCGCNLHLNLLYGENVHHIIEACFKGFGRSLDSATRQDARLHGVMSTKGVL.

The protein belongs to the imidazoleglycerol-phosphate dehydratase family.

Its subcellular location is the cytoplasm. The catalysed reaction is D-erythro-1-(imidazol-4-yl)glycerol 3-phosphate = 3-(imidazol-4-yl)-2-oxopropyl phosphate + H2O. It functions in the pathway amino-acid biosynthesis; L-histidine biosynthesis; L-histidine from 5-phospho-alpha-D-ribose 1-diphosphate: step 6/9. In Trichlorobacter lovleyi (strain ATCC BAA-1151 / DSM 17278 / SZ) (Geobacter lovleyi), this protein is Imidazoleglycerol-phosphate dehydratase.